A 394-amino-acid polypeptide reads, in one-letter code: MLITVYCVRRDLSEVTFSLEVDGDFELENFRALCELESGIPASETLIVYAERPLTNNQRSLASYGLKDGDVVILRQRETPEARPAAPFPGLDFSTIAVPGSSSQPAPSQPQAPPPPPPDTSSFPQGLDNPALLREMLLANPHELSLLKERNPPLAEALLSGDLEKFTKVLLEQQQERARREQERIRLYSADPFDLEAQAKIEEDIRQQNIEENMTIAMEEAPESFGQVVMLYINCKVNGYPVKAFVDSGAQMTIMSQACAERCHIMRLVDRRWAGIAKGVGTQKIIGRVHLAQVQIEGDFLPCSFSILEEQPMDMLLGLDMLKRHQCSIDLEKNVLVIGTTGTRTSFLPEGELPECARLAYGPGREEVRPEEIADRELAEVLQKSAEEADQQKP.

The Ubiquitin-like domain occupies 1–81 (MLITVYCVRR…VILRQRETPE (81 aa)). Residues 82–128 (ARPAAPFPGLDFSTIAVPGSSSQPAPSQPQAPPPPPPDTSSFPQGLD) form a disordered region. Pro residues predominate over residues 107–119 (PSQPQAPPPPPPD). D247 is a catalytic residue. The Ubiquitin-binding motif lies at 371–390 (EEIADRELAEVLQKSAEEAD).

The protein belongs to the DDI1 family. Homodimer.

Its subcellular location is the cytoplasm. The protein resides in the cytosol. The protein localises to the chromosome. In terms of biological role, aspartic protease that mediates the cleavage of NFE2L1/NRF1 at 'Leu-104', thereby promoting release of NFE2L1/NRF1 from the endoplasmic reticulum membrane. Ubiquitination of NFE2L1/NRF1 is a prerequisite for cleavage, suggesting that DDI2 specifically recognizes and binds ubiquitinated NFE2L1/NRF1. Seems to act as a proteasomal shuttle which links the proteasome and replication fork proteins like RTF2. Required for cellular survival following replication stress. In Xenopus tropicalis (Western clawed frog), this protein is Protein DDI1 homolog 2 (ddi2).